Consider the following 328-residue polypeptide: uncharacterized protein (328 aa).

A signal peptide spans 1-32 (MFNFRLFSRRGKSLGLLAIVLLLFGFYSLKSS).

It belongs to the glycosyltransferase 34 family.

It localises to the endoplasmic reticulum. This is an uncharacterized protein from Schizosaccharomyces pombe (strain 972 / ATCC 24843) (Fission yeast).